The primary structure comprises 170 residues: Peptide deformylase 2 (170 aa).

Fe cation contacts are provided by Cys-94 and His-136. Residue Glu-137 is part of the active site. His-140 serves as a coordination point for Fe cation.

It belongs to the polypeptide deformylase family. Fe(2+) serves as cofactor.

It carries out the reaction N-terminal N-formyl-L-methionyl-[peptide] + H2O = N-terminal L-methionyl-[peptide] + formate. Removes the formyl group from the N-terminal Met of newly synthesized proteins. Requires at least a dipeptide for an efficient rate of reaction. N-terminal L-methionine is a prerequisite for activity but the enzyme has broad specificity at other positions. This is Peptide deformylase 2 from Xanthomonas campestris pv. campestris (strain ATCC 33913 / DSM 3586 / NCPPB 528 / LMG 568 / P 25).